The chain runs to 426 residues: Proline--tRNA ligase (426 aa).

This sequence belongs to the class-II aminoacyl-tRNA synthetase family. ProS type 2 subfamily. Homodimer.

The protein localises to the cytoplasm. The catalysed reaction is tRNA(Pro) + L-proline + ATP = L-prolyl-tRNA(Pro) + AMP + diphosphate. Functionally, catalyzes the attachment of proline to tRNA(Pro) in a two-step reaction: proline is first activated by ATP to form Pro-AMP and then transferred to the acceptor end of tRNA(Pro). The chain is Proline--tRNA ligase from Rickettsia rickettsii (strain Iowa).